We begin with the raw amino-acid sequence, 103 residues long: Small ribosomal subunit protein uS10 (103 aa).

The protein belongs to the universal ribosomal protein uS10 family. In terms of assembly, part of the 30S ribosomal subunit.

In terms of biological role, involved in the binding of tRNA to the ribosomes. The protein is Small ribosomal subunit protein uS10 of Campylobacter hominis (strain ATCC BAA-381 / DSM 21671 / CCUG 45161 / LMG 19568 / NCTC 13146 / CH001A).